Consider the following 347-residue polypeptide: UDP-3-O-acylglucosamine N-acyltransferase (347 aa).

Catalysis depends on His248, which acts as the Proton acceptor.

The protein belongs to the transferase hexapeptide repeat family. LpxD subfamily. Homotrimer.

It carries out the reaction a UDP-3-O-[(3R)-3-hydroxyacyl]-alpha-D-glucosamine + a (3R)-hydroxyacyl-[ACP] = a UDP-2-N,3-O-bis[(3R)-3-hydroxyacyl]-alpha-D-glucosamine + holo-[ACP] + H(+). The protein operates within bacterial outer membrane biogenesis; LPS lipid A biosynthesis. In terms of biological role, catalyzes the N-acylation of UDP-3-O-acylglucosamine using 3-hydroxyacyl-ACP as the acyl donor. Is involved in the biosynthesis of lipid A, a phosphorylated glycolipid that anchors the lipopolysaccharide to the outer membrane of the cell. The protein is UDP-3-O-acylglucosamine N-acyltransferase of Synechococcus sp. (strain CC9902).